The sequence spans 905 residues: Probable coatomer subunit gamma (905 aa).

5 HEAT repeats span residues 265–302 (TQFR…NISD), 303–340 (DDLQ…TRPH), 374–412 (DESV…KFPR), 414–450 (QDSM…YIPE), and 525–563 (KFVQ…RDAF). At S604 the chain carries Phosphoserine.

The protein belongs to the COPG family. In terms of assembly, oligomeric complex that consists of at least the alpha, beta, beta', gamma, delta, epsilon and zeta subunits.

It is found in the cytoplasm. The protein localises to the golgi apparatus membrane. It localises to the cytoplasmic vesicle. The protein resides in the COPI-coated vesicle membrane. The coatomer is a cytosolic protein complex that binds to dilysine motifs and reversibly associates with Golgi non-clathrin-coated vesicles, which further mediate biosynthetic protein transport from the ER, via the Golgi up to the trans Golgi network. Coatomer complex is required for budding from Golgi membranes, and is essential for the retrograde Golgi-to-ER transport of dilysine-tagged proteins. The protein is Probable coatomer subunit gamma (sec21) of Schizosaccharomyces pombe (strain 972 / ATCC 24843) (Fission yeast).